The sequence spans 409 residues: Putative competence-damage inducible protein (409 aa).

Belongs to the CinA family.

This chain is Putative competence-damage inducible protein, found in Clostridium botulinum (strain Okra / Type B1).